Reading from the N-terminus, the 155-residue chain is 17.4 kDa class III heat shock protein (155 aa).

The sHSP domain occupies 35-155 (GRGSSNNIPI…KPKTVQIAVS (121 aa)).

The protein belongs to the small heat shock protein (HSP20) family. As to quaternary structure, may form oligomeric structures.

It is found in the cytoplasm. This chain is 17.4 kDa class III heat shock protein (HSP17.4B), found in Arabidopsis thaliana (Mouse-ear cress).